A 90-amino-acid polypeptide reads, in one-letter code: Small ribosomal subunit protein bS20 (90 aa).

The protein belongs to the bacterial ribosomal protein bS20 family.

Functionally, binds directly to 16S ribosomal RNA. The sequence is that of Small ribosomal subunit protein bS20 from Roseiflexus sp. (strain RS-1).